A 262-amino-acid polypeptide reads, in one-letter code: Oxidoreductase GME11367 (262 aa).

It belongs to the avfA family.

It functions in the pathway secondary metabolite biosynthesis. Its function is as follows. Oxidoreductase; part of the gene cluster that mediates the biosynthesis of dibenzodioxocinones such as pestalotiollide B, a novel class of inhibitors against cholesterol ester transfer protein (CEPT). The biosynthesis initiates from condensation of acetate and malonate units catalyzed by the non-reducing PKS pks8/GME11356. Pks8/GME11356 lacks a thioesterase (TE) domain, which is important to the cyclizing of the third ring of atrochrysone carboxylic acid, and the esterase GME11355 might play the role of TE and catalyzes the cyclization reaction of the C ring. The lactamase-like protein GME11357 (or other beta-lactamases in Pestalotiopsis microspora) probably hydrolyzes the thioester bond between the ACP of pks8/GME11356 and the intermediate to release atrochrysone carboxylic acid, which is spontaneously dehydrates to form endocrocin anthrone. Endocrocin anthrone is further converted to emodin via the endocrocin intermediate. Emodin is then oxidized by several enzymes such as the Baeyer-Villiger oxidase GME11358, the oxidoreductase GME11367, the short chain dehydrogenase/reductase GME11373, as well as by other oxidoreductases from the cluster, to modify the A and C rings and open the B ring, and finally yield monodictyphenone. The prenyltransferase GME11375 may catalyze the addition reaction between the C5 side chains and the carbon bone of dibenzodioxocinones. The remaining biochemical reactions to the final product dibenzodioxocinones should be methylation catalyzed by methyltransferase GME11366 and reduction and lactonization reaction catalyzed by a series of oxidordeuctases. The protein is Oxidoreductase GME11367 of Pestalotiopsis microspora.